We begin with the raw amino-acid sequence, 667 residues long: Polypeptide N-acetylgalactosaminyltransferase 3 (667 aa).

At 1–12 (MGLRFQQLKKLW) the chain is on the cytoplasmic side. The chain crosses the membrane as a helical; Signal-anchor for type II membrane protein span at residues 13–35 (LLYLFLLFFAFFMFAISINLYVA). At 36-667 (SIQGGDAEMR…WGFIPLPWRM (632 aa)) the chain is on the lumenal side. Asn-75 and Asn-129 each carry an N-linked (GlcNAc...) asparagine glycan. 5 cysteine pairs are disulfide-bonded: Cys-140–Cys-375, Cys-366–Cys-446, Cys-526–Cys-547, Cys-572–Cys-601, and Cys-626–Cys-649. Positions 149–259 (LPSTSVIIVF…RGWLEPLLSR (111 aa)) are catalytic subdomain A. Substrate is bound by residues Asp-190 and Arg-220. Positions 243 and 245 each coordinate Mn(2+). N-linked (GlcNAc...) asparagine glycans are attached at residues Asn-279 and Asn-313. Positions 321 to 383 (PIATPGMAGG…PCSHVGHVFR (63 aa)) are catalytic subdomain B. Trp-352 is a binding site for substrate. His-380 is a binding site for Mn(2+). Substrate-binding residues include Arg-383 and Tyr-388. Asn-433 carries an N-linked (GlcNAc...) asparagine glycan. The 149-residue stretch at 513–661 (EELMALIDLE…KDITQKWGFI (149 aa)) folds into the Ricin B-type lectin domain. The N-linked (GlcNAc...) asparagine glycan is linked to Asn-590.

The protein belongs to the glycosyltransferase 2 family. GalNAc-T subfamily. Mn(2+) is required as a cofactor. In terms of tissue distribution, expressed in developing oocytes and egg chambers. During embryonic stages 9-11, expressed in the primordiums of the foregut, midgut and hindgut. During embryonic stages 12-13, expression is found uniquely in the posterior spiracle. During embryonic stages 14-17, expressed in the pharynx, esophagus and posterior spiracles. Expression observed in the epidermis during embryonic stages 16-17. In third instar larvae, expressed ubiquitously in wing, with increased expression in pleura and notum, eye-antennal, leg and haltere imaginal disks.

Its subcellular location is the golgi apparatus membrane. The catalysed reaction is L-seryl-[protein] + UDP-N-acetyl-alpha-D-galactosamine = a 3-O-[N-acetyl-alpha-D-galactosaminyl]-L-seryl-[protein] + UDP + H(+). The enzyme catalyses L-threonyl-[protein] + UDP-N-acetyl-alpha-D-galactosamine = a 3-O-[N-acetyl-alpha-D-galactosaminyl]-L-threonyl-[protein] + UDP + H(+). It participates in protein modification; protein glycosylation. Its function is as follows. Catalyzes the initial reaction in O-linked oligosaccharide biosynthesis, the transfer of an N-acetyl-D-galactosamine residue to a serine or threonine residue on the protein receptor. It can both act as a peptide transferase that transfers GalNAc onto unmodified peptide substrates, and as a glycopeptide transferase that requires the prior addition of a GalNAc on a peptide before adding additional GalNAc moieties. Prefers EA2 as substrate. Has weak activity toward Muc5AC-3, -13 and -3/13 substrates. Plays a critical role in the regulation of integrin-mediated cell adhesion during wing development by influencing, via glycosylation, the secretion and localization of the integrin ligand Tig to the basal cell layer interface. Might have a role in protein O-glycosylation in the Golgi and thereby in establishing and/or maintaining a proper secretory apparatus structure. Together with Pgant35A, regulates integrin levels and activity-dependent integrin signaling at the synapse in neurons and muscles. This is Polypeptide N-acetylgalactosaminyltransferase 3 from Drosophila melanogaster (Fruit fly).